A 421-amino-acid chain; its full sequence is Gamma-glutamyl phosphate reductase (421 aa).

Belongs to the gamma-glutamyl phosphate reductase family.

The protein resides in the cytoplasm. The enzyme catalyses L-glutamate 5-semialdehyde + phosphate + NADP(+) = L-glutamyl 5-phosphate + NADPH + H(+). Its pathway is amino-acid biosynthesis; L-proline biosynthesis; L-glutamate 5-semialdehyde from L-glutamate: step 2/2. In terms of biological role, catalyzes the NADPH-dependent reduction of L-glutamate 5-phosphate into L-glutamate 5-semialdehyde and phosphate. The product spontaneously undergoes cyclization to form 1-pyrroline-5-carboxylate. The sequence is that of Gamma-glutamyl phosphate reductase from Erythrobacter litoralis (strain HTCC2594).